The following is a 277-amino-acid chain: MEIVRDVESVRAVLRPFTNRKIGLVPTMGALHSGHLSLVHEMKKHADVVIVSIFVNPLQFSPGEDYEKYPRCEEVDCEKCASAGVDVVYIPSAEGMYPDGFSTSVDIGPMARELCGASRQNFINGIMVVLIKLVMQTNAHCMILGEKDYQMLHLTRQLFRDLNIGVDVLQGNTVRSAEGLALSSRHQYLSSAEITKANFLYGFLLEVGQQLSDDPHGQQEIIARGKLRLEQEGFEVDYLEVRDNNTLEHMQTFRKPARVFLAVYLGNCRLIDNVLLA.

ATP is bound at residue 28-35; the sequence is MGALHSGH. The Proton donor role is filled by H35. Q59 is a (R)-pantoate binding site. A beta-alanine-binding site is contributed by Q59. Residues 145–148, V174, and 182–185 contribute to the ATP site; these read GEKD and LSSR.

The protein belongs to the pantothenate synthetase family. In terms of assembly, homodimer.

The protein localises to the cytoplasm. The enzyme catalyses (R)-pantoate + beta-alanine + ATP = (R)-pantothenate + AMP + diphosphate + H(+). It functions in the pathway cofactor biosynthesis; (R)-pantothenate biosynthesis; (R)-pantothenate from (R)-pantoate and beta-alanine: step 1/1. Catalyzes the condensation of pantoate with beta-alanine in an ATP-dependent reaction via a pantoyl-adenylate intermediate. This chain is Pantothenate synthetase, found in Anaplasma marginale (strain St. Maries).